The primary structure comprises 67 residues: Large ribosomal subunit protein bL35 (67 aa).

The segment covering 1–16 (MPKMKTKSSAKKRFRV) has biased composition (basic residues). The disordered stretch occupies residues 1-24 (MPKMKTKSSAKKRFRVRPGGTVKR).

Belongs to the bacterial ribosomal protein bL35 family.

The polypeptide is Large ribosomal subunit protein bL35 (Verminephrobacter eiseniae (strain EF01-2)).